The following is a 400-amino-acid chain: Enoyl-[acyl-carrier-protein] reductase [NADH] (400 aa).

NAD(+)-binding positions include 48–53, 74–75, 111–112, and 139–140; these read GSSSGY, FE, DA, and LA. Position 225 (Tyr225) interacts with substrate. Residue Tyr235 is the Proton donor of the active site. NAD(+) contacts are provided by residues Lys244 and 273 to 275; that span reads VVT.

This sequence belongs to the TER reductase family. As to quaternary structure, monomer.

It carries out the reaction a 2,3-saturated acyl-[ACP] + NAD(+) = a (2E)-enoyl-[ACP] + NADH + H(+). It functions in the pathway lipid metabolism; fatty acid biosynthesis. Involved in the final reduction of the elongation cycle of fatty acid synthesis (FAS II). Catalyzes the reduction of a carbon-carbon double bond in an enoyl moiety that is covalently linked to an acyl carrier protein (ACP). The protein is Enoyl-[acyl-carrier-protein] reductase [NADH] of Shewanella oneidensis (strain ATCC 700550 / JCM 31522 / CIP 106686 / LMG 19005 / NCIMB 14063 / MR-1).